Consider the following 350-residue polypeptide: Chlorophyll a/b light-harvesting protein PcbA (350 aa).

The next 6 helical transmembrane spans lie at 26 to 46 (LSAH…ITLF), 62 to 82 (LILI…GQVV), 87 to 107 (YFVI…GALY), 214 to 234 (IAVV…FPWA), 248 to 268 (LSAS…FSAV), and 309 to 329 (LCNV…WHAL).

This sequence belongs to the PsbB/PsbC family. IsiA/Pcb subfamily. In terms of assembly, the antenna complex consists of chlorophylls (a and b) and chlorophyll a/b binding proteins. It depends on chlorophyll a as a cofactor. Requires chlorophyll b as cofactor.

Its subcellular location is the cellular thylakoid membrane. Its function is as follows. The antenna complex functions as a light receptor, it captures and delivers excitation energy to photosystems II and I. The Prochlorales pcb genes are not related to higher plant LHCs. This Prochlorothrix hollandica protein is Chlorophyll a/b light-harvesting protein PcbA (pcbA).